Reading from the N-terminus, the 118-residue chain is V-type proton ATPase subunit G 2 (118 aa).

The disordered stretch occupies residues 23–91 (ADARKRKARR…QGMQSSQQRN (69 aa)). The segment covering 35-55 (QAKEEAQMEVEQYRREREQEF) has biased composition (basic and acidic residues). 2 stretches are compositionally biased toward polar residues: residues 56-69 (QSKQQAAMGSQGNL) and 78-89 (RRQVQGMQSSQQ).

It belongs to the V-ATPase G subunit family. V-ATPase is a heteromultimeric enzyme made up of two complexes: the ATP-hydrolytic V1 complex and the proton translocation V0 complex. The V1 complex consists of three catalytic AB heterodimers that form a heterohexamer, three peripheral stalks each consisting of EG heterodimers, one central rotor including subunits D and F, and the regulatory subunits C and H. The proton translocation complex V0 consists of the proton transport subunit a, a ring of proteolipid subunits c9c'', rotary subunit d, subunits e and f, and the accessory subunits ATP6AP1/Ac45 and ATP6AP2/PRR.

The protein resides in the melanosome. The protein localises to the cytoplasmic vesicle. Its subcellular location is the clathrin-coated vesicle membrane. Its function is as follows. Subunit of the V1 complex of vacuolar(H+)-ATPase (V-ATPase), a multisubunit enzyme composed of a peripheral complex (V1) that hydrolyzes ATP and a membrane integral complex (V0) that translocates protons. V-ATPase is responsible for acidifying and maintaining the pH of intracellular compartments and in some cell types, is targeted to the plasma membrane, where it is responsible for acidifying the extracellular environment. The polypeptide is V-type proton ATPase subunit G 2 (Atp6v1g2) (Mus musculus (Mouse)).